The primary structure comprises 251 residues: Ribosomal RNA small subunit methyltransferase G (251 aa).

Residues Gly74, Phe79, 125-126 (AE), and Arg144 each bind S-adenosyl-L-methionine. Residues 224–251 (RPAGLPTQHPLGAIEGAPRVESEEPEEP) are disordered.

The protein belongs to the methyltransferase superfamily. RNA methyltransferase RsmG family.

It localises to the cytoplasm. In terms of biological role, specifically methylates the N7 position of a guanine in 16S rRNA. The polypeptide is Ribosomal RNA small subunit methyltransferase G (Gloeobacter violaceus (strain ATCC 29082 / PCC 7421)).